A 266-amino-acid polypeptide reads, in one-letter code: Integral membrane protein 2B (266 aa).

Topologically, residues 1–54 (MVKVTFNSALAQKEAKKDEPKSSEEALIVPPDAVAVDCKDPGDVVPVGQRRAWC) are cytoplasmic. The helical; Signal-anchor for type II membrane protein transmembrane segment at 55 to 75 (WCMCFGLAFMLAGVILGGAYL) threads the bilayer. Residues 76 to 266 (YKYFALQPDD…KFAVETLICS (191 aa)) lie on the Lumenal side of the membrane. Residues 102–134 (EPSADAPAARYQTIEENIKIFEEDAVEFISVPV) form a necessary for interaction with APP and inhibitor effects on APP processing region. The region spanning 137 to 231 (FADSDPANIV…LCHDKETYKL (95 aa)) is the BRICHOS domain. Disulfide bonds link C164/C223 and C248/C265. A glycan (N-linked (GlcNAc...) asparagine) is linked at N170.

It belongs to the ITM2 family. Homodimer; disulfide-linked. Interacts with SPPL2A and SPPL2B. Interacts with APP. Mature BRI2 (mBRI2) interacts with the APP amyloid-beta A4 protein; the interaction occurs at the cell surface and in the endocytic compartments and enable alpha- and beta-secretase-induced APP cleavage inhibition. Mature BRI2 (mBRI2) interacts with the APP C99; the interaction occurs in the endocytic compartments and enable gamma-secretase-induced C99 cleavage inhibition. May form heterodimers with Bri23 peptide and APP amyloid-beta protein 40. Interacts with ADAM7 in sperm; the interaction increases following capacitation. Post-translationally, the ectodomain C-terminal part of the imBRI2 is processed by furin producing a secreted Bri23 peptide and a mature BRI2, membrane form (mBRI2). The remaining part of the ectodomain of mBRI2 containing the BRICHOS domain is cleaved by ADAM10 and is secreted (BRI2C, soluble form). The membrane-bound N-terminal fragment (BRI2C, membrane form) is further proteolytically processed by SPPL2A and SPPL2B through regulated intramembrane proteolysis producing a secreted C-peptide and a BRI2 intracellular domain (BRI2 ICD) released in the cytosol. Shedding by ADAM10 facilitates intramembrane cleavage but is not absolutely required for BRI2 ICD generation. Glycosylation at Asn-170 is important for cell surface localization, but doesn't affect furin- and ADAM10-induced proteolytic processing. As to expression, expressed in the brain, testis, testicular sperm, epididymis and mature epididymal sperm (at protein level).

It localises to the golgi apparatus membrane. The protein localises to the cell membrane. It is found in the endosome membrane. Its subcellular location is the secreted. Its function is as follows. Plays a regulatory role in the processing of the amyloid-beta A4 precursor protein (APP) and acts as an inhibitor of the amyloid-beta peptide aggregation and fibrils deposition. Plays a role in the induction of neurite outgrowth. Functions as a protease inhibitor by blocking access of secretases to APP cleavage sites. Functionally, mature BRI2 (mBRI2) functions as a modulator of the amyloid-beta A4 precursor protein (APP) processing leading to a strong reduction in the secretion of secretase-processed amyloid-beta protein 40 and amyloid-beta protein 42. Bri23 peptide prevents aggregation of APP amyloid-beta protein 42 into toxic oligomers. This Mus musculus (Mouse) protein is Integral membrane protein 2B (Itm2b).